The following is a 194-amino-acid chain: MSAITITEAAQAYLAELLEKQSTPGIGIRIFITQPGTQYAETCIAYCKPGEEKVEDTAIALKDFTAWIDAVSEPFLEDAVVDYATDRMGGQLTIKAPNAKVPMVNEDSPITERINYYLQTEINPGLASHGGQVSLVDVVEDNIAVLRFGGGCQGCGMVDMTLKDGVEKTLIERIPELKGVRDVTDHSNKENAYY.

[4Fe-4S] cluster-binding residues include cysteine 152 and cysteine 155.

Belongs to the NfuA family. In terms of assembly, homodimer. It depends on [4Fe-4S] cluster as a cofactor.

In terms of biological role, involved in iron-sulfur cluster biogenesis. Binds a 4Fe-4S cluster, can transfer this cluster to apoproteins, and thereby intervenes in the maturation of Fe/S proteins. Could also act as a scaffold/chaperone for damaged Fe/S proteins. This chain is Fe/S biogenesis protein NfuA, found in Pseudomonas aeruginosa (strain LESB58).